Reading from the N-terminus, the 239-residue chain is Cyclo(L-leucyl-L-phenylalanyl) synthase (239 aa).

The active-site Nucleophile is Ser-37. Substrate contacts are provided by residues Asn-40, 178-182, and Tyr-202; that span reads YVLAE.

Belongs to the CDPS family. Monomer.

The catalysed reaction is L-phenylalanyl-tRNA(Phe) + L-leucyl-tRNA(Leu) = cyclo(L-phenylalanyl-L-leucyl) + tRNA(Phe) + tRNA(Leu) + H(+). In terms of biological role, involved in the biosynthesis of albonoursin (cyclo[(alpha,beta-dehydro-Phe)-(alpha,beta-dehydro-Leu)]), an antibacterial peptide. It uses activated amino acids in the form of aminoacyl-tRNAs (aa-tRNAs) as substrates to catalyze the ATP-independent formation of cyclodipeptides which are intermediates in diketopiperazine (DKP) biosynthetic pathways. Catalyzes the formation of cyclo(L-Phe-L-Leu) (cFL) as major products from L-L-phenylalanyl-tRNA(Phe) and L-leucyl-tRNA(Leu). AlbC can also incorporate various nonpolar residues, such as L-phenylalanine, L-leucine, L-tyrosine and L-methionine, and to a much lesser extent L-alanine and L-valine, into cyclodipeptides. Indeed, ten possible cyclodipeptides composed of L-phenylalanine, L-leucine, L-tyrosine and L-methionine are all synthesized to detectable amounts by AlbC. This Streptomyces noursei (Streptomyces albulus) protein is Cyclo(L-leucyl-L-phenylalanyl) synthase (albC).